A 565-amino-acid polypeptide reads, in one-letter code: Thiol:disulfide interchange protein DsbD (565 aa).

Residues 1–19 form the signal peptide; the sequence is MAQRIFTLILLLCSTSVFA. Cystine bridges form between Cys-122/Cys-128 and Cys-182/Cys-304. Transmembrane regions (helical) follow at residues 163 to 183, 208 to 228, 243 to 263, 296 to 316, 323 to 343, 357 to 377, and 384 to 404; these read LPFSALWALLIGIGIAFTPCV, LLTFIYVQGMALTYTALGLVV, YVLIGLAIVFTLLAMSMFGLF, IAGLICSPCTTAPLSAILLYI, WLGGGTLYLYALGMGLPLMLI, WMEQVKTAFGFVILALPVFLL, and VWGLRLWSALGVAFFGWAFIT. Residues 434–565 enclose the Thioredoxin domain; sequence WAFGATHTAQ…FSAHLRDRQP (132 aa). A disulfide bridge connects residues Cys-480 and Cys-483.

Belongs to the thioredoxin family. DsbD subfamily.

Its subcellular location is the cell inner membrane. It catalyses the reaction [protein]-dithiol + NAD(+) = [protein]-disulfide + NADH + H(+). The catalysed reaction is [protein]-dithiol + NADP(+) = [protein]-disulfide + NADPH + H(+). Functionally, required to facilitate the formation of correct disulfide bonds in some periplasmic proteins and for the assembly of the periplasmic c-type cytochromes. Acts by transferring electrons from cytoplasmic thioredoxin to the periplasm. This transfer involves a cascade of disulfide bond formation and reduction steps. This chain is Thiol:disulfide interchange protein DsbD, found in Shigella flexneri serotype 5b (strain 8401).